The primary structure comprises 256 residues: 3-isopropylmalate dehydratase small subunit 2 (256 aa).

The N-terminal 59 residues, 1 to 59 (MAYSLPTFPQALPCSSTKTSSSLATFRSPFLRFNGSTSLIPSSISITSRGTSSPTIIPR), are a transit peptide targeting the chloroplast.

Belongs to the LeuD family. As to quaternary structure, heterodimer of the large LEUC/IIL1 subunit and the small LEUD (SSU1, SSU2 or SSU3) subunits. Expressed in vascular bundles of roots, cotyledons and rosette leaves. Expressed in stem vascular bundles which branche off into lateral inflorescences. Expressed in connective tissues in anthers. In young seedlings, expressed in cotyledon epidermal cells and vasculare bundles. In hypocotyls, expressed in parenchyma cells surrounding the vasculature and further peripheral cells. In seedling roots, expressed in cells along the vasculature. In roots of adult plants, expressed in cells closely associated with the stele. In flowering stalks, expressed in parenchyma cells associated with the phloem or the xylem. Expressed in the vasculature of sepals and petals.

It is found in the plastid. It localises to the chloroplast stroma. It catalyses the reaction (2R,3S)-3-isopropylmalate = (2S)-2-isopropylmalate. It carries out the reaction a 2-(omega-methylsulfanyl)alkylmalate = a 2-(omega-methylsulfanyl)alkylmaleate + H2O. The catalysed reaction is 2-(3-methylsulfanyl)propylmalate = 2-(2-methylsulfanyl)propylmaleate + H2O. The enzyme catalyses a 3-(omega-methylsulfanyl)alkylmalate = a 2-(omega-methylsulfanyl)alkylmaleate + H2O. It catalyses the reaction 2-(2-methylsulfanyl)ethylmalate = 2-(2-methylsulfanyl)ethylmaleate + H2O. It carries out the reaction 3-(2-methylsulfanyl)ethylmalate = 2-(2-methylsulfanyl)ethylmaleate + H2O. The catalysed reaction is 3-(3-methylsulfanyl)propylmalate = 2-(2-methylsulfanyl)propylmaleate + H2O. Its pathway is amino-acid biosynthesis; L-leucine biosynthesis; L-leucine from 3-methyl-2-oxobutanoate: step 2/4. Functionally, catalyzes the isomerization between 2-isopropylmalate and 3-isopropylmalate, via the formation of 2-isopropylmaleate. Functions redundantly with LEUD2 in the methionine chain elongation pathway of aliphatic glucosinolate formation. The chain is 3-isopropylmalate dehydratase small subunit 2 from Arabidopsis thaliana (Mouse-ear cress).